Here is a 615-residue protein sequence, read N- to C-terminus: Cilia- and flagella-associated protein 52 (615 aa).

WD repeat units lie at residues 54 to 98 (GHSD…LIHR), 101 to 142 (LHKV…AICG), 145 to 184 (CNTNFTNCVKFFNNSPDKLITAGNFNMNVWTYDAGNNKLR), 232 to 275 (GPAK…AGTK), 320 to 359 (AHNDKINGMAFPNEYSEVFATCGTGFIRLWHLTTCRELLR), 362 to 401 (VPNLECFCIAFTTDGSAILSGWSDGKIRAFGPQSGKIIFT), 405 to 444 (AHQKAVTAIASTADSSRILSGGEEGMVRVWRIGRTSQTLE), 449 to 488 (DHKGPVNCIRIKGSGDECVSASSDGSCILWDLHTFKRRTS), 490 to 529 (FANTFFKSVVYHPDESQLVTAGTDRKVTYWDAYDGNAIRI), 533 to 572 (SDLDEVNALAVDRDGEALVSGGGDKLVKLWGYDEGHCYFV), and 575 to 614 (AHSGAITAVGVTPDKQRIVSVGTEGGIFIWDYQRPQTLAD).

The protein belongs to the CFAP52 family.

It is found in the cytoplasm. The protein resides in the cell projection. It localises to the cilium. The protein localises to the flagellum. In terms of biological role, may play a role in cell growth and/or survival. In Chlamydomonas reinhardtii (Chlamydomonas smithii), this protein is Cilia- and flagella-associated protein 52.